The following is a 145-amino-acid chain: D-aminoacyl-tRNA deacylase (145 aa).

Residues 133 to 134 (GP) carry the Gly-cisPro motif, important for rejection of L-amino acids motif.

The protein belongs to the DTD family. Homodimer.

The protein resides in the cytoplasm. It carries out the reaction glycyl-tRNA(Ala) + H2O = tRNA(Ala) + glycine + H(+). It catalyses the reaction a D-aminoacyl-tRNA + H2O = a tRNA + a D-alpha-amino acid + H(+). An aminoacyl-tRNA editing enzyme that deacylates mischarged D-aminoacyl-tRNAs. Also deacylates mischarged glycyl-tRNA(Ala), protecting cells against glycine mischarging by AlaRS. Acts via tRNA-based rather than protein-based catalysis; rejects L-amino acids rather than detecting D-amino acids in the active site. By recycling D-aminoacyl-tRNA to D-amino acids and free tRNA molecules, this enzyme counteracts the toxicity associated with the formation of D-aminoacyl-tRNA entities in vivo and helps enforce protein L-homochirality. The polypeptide is D-aminoacyl-tRNA deacylase (Cutibacterium acnes (strain DSM 16379 / KPA171202) (Propionibacterium acnes)).